Reading from the N-terminus, the 344-residue chain is MSVVVRHDWDRKELQALFDLPFPELLHRAASVHRAHFDPAQVQVSTLLSVKTGGCPEDCAYCPQAQRYDTGVSAQKLMETEEVVAKARQAKAAGASRFCMGAAWRSPKERDIPKVAAMIREVKAMGLETCATLGMLDAGQARALKDAGLDYYNHNLDTAPDYYDSIIHTRQYQDRLNTLEHVRDVGLKTCCGGIVGMGETREHRVGLLLALATLPAHPDSVPINQLVQVPGTPLHGTQQLDPFEFVRMIAVARIAMPKSMVRLSAGREAMSDELQALCFLAGANSIFYGEKLLTTGNPDTERDQALFQRLGLRPMQITVDAAEHDHPGTVHAEITRSAACEHAA.

Residues 40–267 (AQVQVSTLLS…KSMVRLSAGR (228 aa)) enclose the Radical SAM core domain. [4Fe-4S] cluster contacts are provided by C55, C59, and C62. [2Fe-2S] cluster contacts are provided by C99, C130, C190, and R262.

The protein belongs to the radical SAM superfamily. Biotin synthase family. As to quaternary structure, homodimer. The cofactor is [4Fe-4S] cluster. Requires [2Fe-2S] cluster as cofactor.

The enzyme catalyses (4R,5S)-dethiobiotin + (sulfur carrier)-SH + 2 reduced [2Fe-2S]-[ferredoxin] + 2 S-adenosyl-L-methionine = (sulfur carrier)-H + biotin + 2 5'-deoxyadenosine + 2 L-methionine + 2 oxidized [2Fe-2S]-[ferredoxin]. It functions in the pathway cofactor biosynthesis; biotin biosynthesis; biotin from 7,8-diaminononanoate: step 2/2. Catalyzes the conversion of dethiobiotin (DTB) to biotin by the insertion of a sulfur atom into dethiobiotin via a radical-based mechanism. The polypeptide is Biotin synthase (Xanthomonas euvesicatoria pv. vesicatoria (strain 85-10) (Xanthomonas campestris pv. vesicatoria)).